The sequence spans 483 residues: ATP-dependent protease ATPase subunit HslU (483 aa).

Residues valine 18 and glycine 60 to glutamate 65 contribute to the ATP site. Low complexity-rich tracts occupy residues leucine 136–glutamine 147 and alanine 171–proline 181. The interval leucine 136–valine 212 is disordered. Positions threonine 182–arginine 191 are enriched in polar residues. Positions serine 192–aspartate 209 are enriched in basic and acidic residues. 3 residues coordinate ATP: aspartate 296, glutamate 361, and arginine 433.

The protein belongs to the ClpX chaperone family. HslU subfamily. As to quaternary structure, a double ring-shaped homohexamer of HslV is capped on each side by a ring-shaped HslU homohexamer. The assembly of the HslU/HslV complex is dependent on binding of ATP.

Its subcellular location is the cytoplasm. ATPase subunit of a proteasome-like degradation complex; this subunit has chaperone activity. The binding of ATP and its subsequent hydrolysis by HslU are essential for unfolding of protein substrates subsequently hydrolyzed by HslV. HslU recognizes the N-terminal part of its protein substrates and unfolds these before they are guided to HslV for hydrolysis. The polypeptide is ATP-dependent protease ATPase subunit HslU (Nitratidesulfovibrio vulgaris (strain DSM 19637 / Miyazaki F) (Desulfovibrio vulgaris)).